A 511-amino-acid polypeptide reads, in one-letter code: Pancreatic alpha-amylase (511 aa).

Positions 1 to 15 are cleaved as a signal peptide; sequence MKLFLLLSAFGFCWA. A Pyrrolidone carboxylic acid modification is found at Gln16. Intrachain disulfides connect Cys43–Cys101, Cys85–Cys130, and Cys156–Cys175. Ca(2+) is bound by residues Asn115, Arg173, and Asp182. Position 210 (Arg210) interacts with chloride. Catalysis depends on Asp212, which acts as the Nucleophile. His216 is a Ca(2+) binding site. Glu248 serves as the catalytic Proton donor. 2 residues coordinate chloride: Asn313 and Arg352. Residues Cys393 and Cys399 are joined by a disulfide bond. A glycan (N-linked (GlcNAc...) asparagine) is linked at Asn427. A disulfide bridge links Cys465 with Cys477.

The protein belongs to the glycosyl hydrolase 13 family. Binds to the sea anemone inhibitor helianthamide and magnificamide. Ca(2+) is required as a cofactor. The cofactor is chloride.

It is found in the secreted. The protein resides in the extracellular space. It catalyses the reaction Endohydrolysis of (1-&gt;4)-alpha-D-glucosidic linkages in polysaccharides containing three or more (1-&gt;4)-alpha-linked D-glucose units.. The sequence is that of Pancreatic alpha-amylase (AMY2) from Sus scrofa (Pig).